Here is a 185-residue protein sequence, read N- to C-terminus: Ribosome maturation factor RimM (185 aa).

Residues 106-185 (SGEYYWKDLL…IIEVDWDPGF (80 aa)) form the PRC barrel domain.

Belongs to the RimM family. As to quaternary structure, binds ribosomal protein uS19.

It localises to the cytoplasm. In terms of biological role, an accessory protein needed during the final step in the assembly of 30S ribosomal subunit, possibly for assembly of the head region. Essential for efficient processing of 16S rRNA. May be needed both before and after RbfA during the maturation of 16S rRNA. It has affinity for free ribosomal 30S subunits but not for 70S ribosomes. The protein is Ribosome maturation factor RimM of Sodalis glossinidius (strain morsitans).